Consider the following 573-residue polypeptide: Heat shock protein 60A (573 aa).

Residues 1–57 (MFRLPVSLARSSISRQLAMRGYAKDVRFGPEVRAMMLQGVDVLADAVAVTMGPKGRN) constitute a mitochondrion transit peptide.

Belongs to the chaperonin (HSP60) family.

It localises to the mitochondrion matrix. Functionally, prevents misfolding and promotes the refolding and proper assembly of unfolded polypeptides generated under stress conditions. The polypeptide is Heat shock protein 60A (Drosophila melanogaster (Fruit fly)).